The primary structure comprises 383 residues: Acetylornithine deacetylase (383 aa).

Position 80 (His80) interacts with Zn(2+). The active site involves Asp82. A Zn(2+)-binding site is contributed by Asp112. The active site involves Glu144. The Zn(2+) site is built by Glu145, Glu169, and His355.

The protein belongs to the peptidase M20A family. ArgE subfamily. Homodimer. Zn(2+) is required as a cofactor. The cofactor is Co(2+). It depends on glutathione as a cofactor.

Its subcellular location is the cytoplasm. It catalyses the reaction N(2)-acetyl-L-ornithine + H2O = L-ornithine + acetate. The protein operates within amino-acid biosynthesis; L-arginine biosynthesis; L-ornithine from N(2)-acetyl-L-ornithine (linear): step 1/1. Catalyzes the hydrolysis of the amide bond of N(2)-acetylated L-amino acids. Cleaves the acetyl group from N-acetyl-L-ornithine to form L-ornithine, an intermediate in L-arginine biosynthesis pathway, and a branchpoint in the synthesis of polyamines. The chain is Acetylornithine deacetylase from Salmonella heidelberg (strain SL476).